We begin with the raw amino-acid sequence, 150 residues long: D-aminoacyl-tRNA deacylase (150 aa).

Residues 138–139 carry the Gly-cisPro motif, important for rejection of L-amino acids motif; the sequence is GP.

This sequence belongs to the DTD family. As to quaternary structure, homodimer.

It is found in the cytoplasm. The enzyme catalyses glycyl-tRNA(Ala) + H2O = tRNA(Ala) + glycine + H(+). The catalysed reaction is a D-aminoacyl-tRNA + H2O = a tRNA + a D-alpha-amino acid + H(+). An aminoacyl-tRNA editing enzyme that deacylates mischarged D-aminoacyl-tRNAs. Also deacylates mischarged glycyl-tRNA(Ala), protecting cells against glycine mischarging by AlaRS. Acts via tRNA-based rather than protein-based catalysis; rejects L-amino acids rather than detecting D-amino acids in the active site. By recycling D-aminoacyl-tRNA to D-amino acids and free tRNA molecules, this enzyme counteracts the toxicity associated with the formation of D-aminoacyl-tRNA entities in vivo and helps enforce protein L-homochirality. In Cytophaga hutchinsonii (strain ATCC 33406 / DSM 1761 / CIP 103989 / NBRC 15051 / NCIMB 9469 / D465), this protein is D-aminoacyl-tRNA deacylase.